Reading from the N-terminus, the 474-residue chain is Bifunctional protein HldE (474 aa).

Residues 1-317 (MKLSMPRFDR…RRAVQREQGS (317 aa)) are ribokinase. 194-197 (NLAE) contributes to the ATP binding site. The active site involves Asp263. A cytidylyltransferase region spans residues 343–474 (FTNGCFDILH…GIVEKIRRQP (132 aa)).

It in the N-terminal section; belongs to the carbohydrate kinase PfkB family. In the C-terminal section; belongs to the cytidylyltransferase family. In terms of assembly, homodimer.

It carries out the reaction D-glycero-beta-D-manno-heptose 7-phosphate + ATP = D-glycero-beta-D-manno-heptose 1,7-bisphosphate + ADP + H(+). The catalysed reaction is D-glycero-beta-D-manno-heptose 1-phosphate + ATP + H(+) = ADP-D-glycero-beta-D-manno-heptose + diphosphate. It functions in the pathway nucleotide-sugar biosynthesis; ADP-L-glycero-beta-D-manno-heptose biosynthesis; ADP-L-glycero-beta-D-manno-heptose from D-glycero-beta-D-manno-heptose 7-phosphate: step 1/4. Its pathway is nucleotide-sugar biosynthesis; ADP-L-glycero-beta-D-manno-heptose biosynthesis; ADP-L-glycero-beta-D-manno-heptose from D-glycero-beta-D-manno-heptose 7-phosphate: step 3/4. Functionally, catalyzes the phosphorylation of D-glycero-D-manno-heptose 7-phosphate at the C-1 position to selectively form D-glycero-beta-D-manno-heptose-1,7-bisphosphate. Its function is as follows. Catalyzes the ADP transfer from ATP to D-glycero-beta-D-manno-heptose 1-phosphate, yielding ADP-D-glycero-beta-D-manno-heptose. The sequence is that of Bifunctional protein HldE from Azotobacter vinelandii (strain DJ / ATCC BAA-1303).